Here is a 171-residue protein sequence, read N- to C-terminus: Co-chaperone protein HscB (171 aa).

The J domain maps to 2-74 (DYFTLFGLPA…LTRAEYLLSL (73 aa)).

This sequence belongs to the HscB family. Interacts with HscA and stimulates its ATPase activity. Interacts with IscU.

Its function is as follows. Co-chaperone involved in the maturation of iron-sulfur cluster-containing proteins. Seems to help targeting proteins to be folded toward HscA. This chain is Co-chaperone protein HscB, found in Salmonella typhimurium (strain LT2 / SGSC1412 / ATCC 700720).